The chain runs to 220 residues: 1-Cys peroxiredoxin B (220 aa).

One can recognise a Thioredoxin domain in the interval 4–165 (LTLGDVVPDL…VLRATDALLT (162 aa)). The active-site Cysteine sulfenic acid (-SOH) intermediate is cysteine 46. The short motif at 195-218 (KARFPAGFETAQLPSNKCYLRFTQ) is the Bipartite nuclear localization signal element.

The protein belongs to the peroxiredoxin family. Prx6 subfamily.

The protein localises to the nucleus. The protein resides in the cytoplasm. It carries out the reaction a hydroperoxide + [thioredoxin]-dithiol = an alcohol + [thioredoxin]-disulfide + H2O. Functionally, thiol-specific peroxidase that catalyzes the reduction of hydrogen peroxide and organic hydroperoxides to water and alcohols, respectively. Seems to contribute to the inhibition of germination during stress. This Oryza sativa subsp. japonica (Rice) protein is 1-Cys peroxiredoxin B.